The following is a 291-amino-acid chain: Protein US2 (291 aa).

Gly-2 is modified (N-acetylglycine; by host). Positions 223-281 are disordered; that stretch reads NKPRPASSRPHPATHPTQRPCFTCMGRPEIPDEPSWQTGDDDPQNPGPPLAVGDEWPPS.

This sequence belongs to the herpesviridae HHV-1 US2 protein family. As to quaternary structure, interacts with host KRT18. Interacts with host MAP3K7; this interaction induces host NF-kappa-B pathway.

The protein localises to the virion. It is found in the host cytoplasm. Its subcellular location is the host cell surface. The protein resides in the host nucleus. Functionally, plays a role in the activation of the host NF-kappa-B pathway by interacting with and thus activating the component MAP3K7. This is Protein US2 from Human herpesvirus 2 (strain HG52) (HHV-2).